We begin with the raw amino-acid sequence, 449 residues long: N-succinylarginine dihydrolase (449 aa).

Substrate-binding positions include 19–28 (GGLSYGNVAS), Asn110, and 137–138 (HR). Residues 23–43 (YGNVASQSNSQQGSNPREAAR) form a disordered region. Residues 25–37 (NVASQSNSQQGSN) show a composition bias toward polar residues. Glu174 is a catalytic residue. Residue Arg214 coordinates substrate. His250 is an active-site residue. Positions 252 and 365 each coordinate substrate. Residue Cys371 is the Nucleophile of the active site.

This sequence belongs to the succinylarginine dihydrolase family. In terms of assembly, homodimer.

It catalyses the reaction N(2)-succinyl-L-arginine + 2 H2O + 2 H(+) = N(2)-succinyl-L-ornithine + 2 NH4(+) + CO2. Its pathway is amino-acid degradation; L-arginine degradation via AST pathway; L-glutamate and succinate from L-arginine: step 2/5. In terms of biological role, catalyzes the hydrolysis of N(2)-succinylarginine into N(2)-succinylornithine, ammonia and CO(2). The sequence is that of N-succinylarginine dihydrolase from Pseudomonas entomophila (strain L48).